Here is a 589-residue protein sequence, read N- to C-terminus: Aspartate--tRNA ligase (589 aa).

Glu174 lines the L-aspartate pocket. Positions 198-201 (QLFK) are aspartate. Residue Arg220 participates in L-aspartate binding. ATP contacts are provided by residues 220–222 (RDE) and Gln229. His448 is an L-aspartate binding site. Glu483 contacts ATP. Residue Arg490 coordinates L-aspartate. 535–538 (GIDR) serves as a coordination point for ATP.

It belongs to the class-II aminoacyl-tRNA synthetase family. Type 1 subfamily. In terms of assembly, homodimer.

The protein resides in the cytoplasm. It carries out the reaction tRNA(Asp) + L-aspartate + ATP = L-aspartyl-tRNA(Asp) + AMP + diphosphate. Catalyzes the attachment of L-aspartate to tRNA(Asp) in a two-step reaction: L-aspartate is first activated by ATP to form Asp-AMP and then transferred to the acceptor end of tRNA(Asp). In Xylella fastidiosa (strain M12), this protein is Aspartate--tRNA ligase.